The following is a 256-amino-acid chain: UPF0246 protein PG_1544 (256 aa).

It belongs to the UPF0246 family.

This Porphyromonas gingivalis (strain ATCC BAA-308 / W83) protein is UPF0246 protein PG_1544.